A 184-amino-acid polypeptide reads, in one-letter code: MNAVFPGSFDPITSGHMDVLTRASRIFEHVTVTVMHNARKQGRHLFSLEERLEILREATAHLPNVSVDSFSGLLVDYMRQQQKGIIVRGLRAVSDYEYELQIAHLNRQIGEVETVFIMAATRWSFVSSTMVKEIASYGGDISEMVPRASAAALKRKFAQQYAAREAELSSAGERGAQQAAESKT.

Serine 8 is a binding site for substrate. ATP-binding positions include 8–9 (SF) and histidine 16. 3 residues coordinate substrate: lysine 40, leucine 74, and arginine 88. ATP contacts are provided by residues 89 to 91 (GLR), glutamate 99, and 123 to 129 (WSFVSST).

It belongs to the bacterial CoaD family. In terms of assembly, homohexamer. It depends on Mg(2+) as a cofactor.

It localises to the cytoplasm. The enzyme catalyses (R)-4'-phosphopantetheine + ATP + H(+) = 3'-dephospho-CoA + diphosphate. It participates in cofactor biosynthesis; coenzyme A biosynthesis; CoA from (R)-pantothenate: step 4/5. Reversibly transfers an adenylyl group from ATP to 4'-phosphopantetheine, yielding dephospho-CoA (dPCoA) and pyrophosphate. The polypeptide is Phosphopantetheine adenylyltransferase (Deinococcus geothermalis (strain DSM 11300 / CIP 105573 / AG-3a)).